A 243-amino-acid polypeptide reads, in one-letter code: Exosome complex component Rrp41 (243 aa).

It belongs to the RNase PH family. Rrp41 subfamily. In terms of assembly, component of the archaeal exosome complex. Forms a hexameric ring-like arrangement composed of 3 Rrp41-Rrp42 heterodimers. The hexameric ring associates with a trimer of Rrp4 and/or Csl4 subunits.

Its subcellular location is the cytoplasm. Functionally, catalytic component of the exosome, which is a complex involved in RNA degradation. Has 3'-&gt;5' exoribonuclease activity. Can also synthesize heteromeric RNA-tails. The chain is Exosome complex component Rrp41 from Sulfurisphaera tokodaii (strain DSM 16993 / JCM 10545 / NBRC 100140 / 7) (Sulfolobus tokodaii).